A 356-amino-acid chain; its full sequence is S-adenosylmethionine:tRNA ribosyltransferase-isomerase (356 aa).

This sequence belongs to the QueA family. In terms of assembly, monomer.

The protein resides in the cytoplasm. It catalyses the reaction 7-aminomethyl-7-carbaguanosine(34) in tRNA + S-adenosyl-L-methionine = epoxyqueuosine(34) in tRNA + adenine + L-methionine + 2 H(+). It functions in the pathway tRNA modification; tRNA-queuosine biosynthesis. In terms of biological role, transfers and isomerizes the ribose moiety from AdoMet to the 7-aminomethyl group of 7-deazaguanine (preQ1-tRNA) to give epoxyqueuosine (oQ-tRNA). The polypeptide is S-adenosylmethionine:tRNA ribosyltransferase-isomerase (Escherichia coli (strain UTI89 / UPEC)).